An 831-amino-acid polypeptide reads, in one-letter code: Prickle-like protein 1 (831 aa).

The PET domain maps to phenylalanine 14–methionine 122. 3 LIM zinc-binding domains span residues alanine 124 to proline 189, proline 189 to glutamate 249, and glutamate 249 to histidine 313. Positions alanine 314 to cysteine 346 are disordered. Phosphoserine occurs at positions 315, 591, and 594. 2 disordered regions span residues glutamate 664–asparagine 688 and cysteine 763–serine 831. A compositionally biased stretch (basic residues) spans arginine 669–lysine 680. Phosphoserine is present on serine 683. Over residues aspartate 797–glutamine 812 the composition is skewed to polar residues. Basic residues predominate over residues threonine 815–serine 831. Cysteine 828 bears the Cysteine methyl ester mark. Residue cysteine 828 is the site of S-farnesyl cysteine attachment. A propeptide spans isoleucine 829–serine 831 (removed in mature form).

The protein belongs to the prickle / espinas / testin family. Interacts with REST.

It localises to the nucleus membrane. It is found in the cytoplasm. The protein localises to the cytosol. In terms of biological role, involved in the planar cell polarity pathway that controls convergent extension during gastrulation and neural tube closure. Convergent extension is a complex morphogenetic process during which cells elongate, move mediolaterally, and intercalate between neighboring cells, leading to convergence toward the mediolateral axis and extension along the anteroposterior axis. Necessary for nuclear localization of REST. May serve as nuclear receptor. This Rattus norvegicus (Rat) protein is Prickle-like protein 1 (Prickle1).